Reading from the N-terminus, the 256-residue chain is N-acetylglucosaminyldiphosphoundecaprenol N-acetyl-beta-D-mannosaminyltransferase (256 aa).

It belongs to the glycosyltransferase 26 family. TagA/TarA subfamily.

The catalysed reaction is UDP-N-acetyl-alpha-D-mannosamine + N-acetyl-alpha-D-glucosaminyl-di-trans,octa-cis-undecaprenyl diphosphate = N-acetyl-beta-D-mannosaminyl-(1-&gt;4)-N-acetyl-alpha-D-glucosaminyl di-trans,octa-cis-undecaprenyl diphosphate + UDP + H(+). It participates in cell wall biogenesis; poly(glycerol phosphate) teichoic acid biosynthesis. Catalyzes the conversion of GlcNAc-PP-undecaprenol into ManNAc-GlcNAc-PP-undecaprenol, the first committed lipid intermediate in the de novo synthesis of teichoic acid. This Bacillus subtilis (strain 168) protein is N-acetylglucosaminyldiphosphoundecaprenol N-acetyl-beta-D-mannosaminyltransferase.